The following is a 160-amino-acid chain: Arginine repressor (160 aa).

This sequence belongs to the ArgR family.

It localises to the cytoplasm. The protein operates within amino-acid biosynthesis; L-arginine biosynthesis [regulation]. Functionally, regulates arginine biosynthesis genes. This is Arginine repressor from Anaeromyxobacter dehalogenans (strain 2CP-1 / ATCC BAA-258).